Consider the following 291-residue polypeptide: Polyamine aminopropyltransferase (291 aa).

One can recognise a PABS domain in the interval 5–245; it reads PGPISLIEPL…YAVNYILGSL (241 aa). Glutamine 36 provides a ligand contact to S-methyl-5'-thioadenosine. Spermidine-binding residues include histidine 67 and glutamate 91. S-methyl-5'-thioadenosine is bound by residues aspartate 111 and 143 to 144; that span reads DG. The active-site Proton acceptor is the aspartate 164.

The protein belongs to the spermidine/spermine synthase family. As to quaternary structure, homodimer or homotetramer.

It is found in the cytoplasm. The catalysed reaction is S-adenosyl 3-(methylsulfanyl)propylamine + putrescine = S-methyl-5'-thioadenosine + spermidine + H(+). It functions in the pathway amine and polyamine biosynthesis; spermidine biosynthesis; spermidine from putrescine: step 1/1. Its function is as follows. Catalyzes the irreversible transfer of a propylamine group from the amino donor S-adenosylmethioninamine (decarboxy-AdoMet) to putrescine (1,4-diaminobutane) to yield spermidine. The protein is Polyamine aminopropyltransferase of Pyrobaculum neutrophilum (strain DSM 2338 / JCM 9278 / NBRC 100436 / V24Sta) (Thermoproteus neutrophilus).